A 220-amino-acid polypeptide reads, in one-letter code: Small ribosomal subunit protein uS3 (220 aa).

Residues 39–107 form the KH type-2 domain; sequence IREHVEGRLK…RVHINISEIK (69 aa).

It belongs to the universal ribosomal protein uS3 family. As to quaternary structure, part of the 30S ribosomal subunit. Forms a tight complex with proteins S10 and S14.

Binds the lower part of the 30S subunit head. Binds mRNA in the 70S ribosome, positioning it for translation. The sequence is that of Small ribosomal subunit protein uS3 from Shouchella clausii (strain KSM-K16) (Alkalihalobacillus clausii).